We begin with the raw amino-acid sequence, 581 residues long: Protein SPT2 homolog (581 aa).

A compositionally biased stretch (low complexity) spans Tyr-26–Lys-35. 2 disordered regions span residues Tyr-26–Lys-50 and Gln-145–Ser-495. Positions Lys-36–Lys-76 form a coiled coil. Positions Ser-162 to Gly-181 are enriched in basic and acidic residues. Composition is skewed to polar residues over residues Asn-182–Thr-197 and Val-204–Thr-213. 2 stretches are compositionally biased toward basic and acidic residues: residues Asn-218–Arg-236 and Leu-256–Pro-312. Residues Glu-276–Glu-307 are a coiled coil. The span at Ser-352–Ser-376 shows a compositional bias: low complexity. Polar residues predominate over residues Thr-447–Gly-461. A compositionally biased stretch (acidic residues) spans Asp-486–Ser-495.

It belongs to the SPT2 family.

This Drosophila melanogaster (Fruit fly) protein is Protein SPT2 homolog.